The sequence spans 221 residues: CASP-like protein 4C1 (221 aa).

Residues 1–21 (MDSPESSDRGLNPMTPDHGGH) form a disordered region. Residues 1 to 54 (MDSPESSDRGLNPMTPDHGGHNGKVVHYFGQGVEGGPASPRKLGHGHLHPKANT) are Cytoplasmic-facing. Residues 55–75 (ALLLLRLLTFAFSLASLVIMA) traverse the membrane as a helical segment. The Extracellular segment spans residues 76–101 (TNSATTTATAGRHRTVNWVDFDTYRY). Residues 102–122 (VLAACAIVCLYSFAEIGLGLW) form a helical membrane-spanning segment. The Cytoplasmic portion of the chain corresponds to 123-144 (YLLKGRMVMPESMAHWFDFGHD). A helical membrane pass occupies residues 145–165 (QGFAYLIFSACSGATAVAHNL). Over 166–189 (RERHILIHGMYGCDEANSFCMKAE) the chain is Extracellular. A helical transmembrane segment spans residues 190 to 210 (ISIGLAFGAFLFIALSSLLSG). The Cytoplasmic portion of the chain corresponds to 211-221 (YRLVKWLILGP).

Belongs to the Casparian strip membrane proteins (CASP) family. As to quaternary structure, homodimer and heterodimers.

The protein localises to the cell membrane. The sequence is that of CASP-like protein 4C1 from Pteridium aquilinum subsp. aquilinum (Bracken fern).